A 358-amino-acid polypeptide reads, in one-letter code: Heme A synthase (358 aa).

8 helical membrane-spanning segments follow: residues 25-45 (LVRY…MVGG), 111-131 (LLAR…WLTG), 141-161 (MLGL…MVAS), 176-196 (IHLT…RGLV), 210-230 (FAGW…LVAG), 269-289 (VQFV…LHAV), 304-324 (TIVL…TLLM), and 326-346 (APLH…AFAV). H273 lines the heme pocket. H334 lines the heme pocket.

Belongs to the COX15/CtaA family. Type 2 subfamily. As to quaternary structure, interacts with CtaB. Requires heme b as cofactor.

The protein localises to the cell membrane. It catalyses the reaction Fe(II)-heme o + 2 A + H2O = Fe(II)-heme a + 2 AH2. It participates in porphyrin-containing compound metabolism; heme A biosynthesis; heme A from heme O: step 1/1. Its function is as follows. Catalyzes the conversion of heme O to heme A by two successive hydroxylations of the methyl group at C8. The first hydroxylation forms heme I, the second hydroxylation results in an unstable dihydroxymethyl group, which spontaneously dehydrates, resulting in the formyl group of heme A. The polypeptide is Heme A synthase (Brucella abortus (strain S19)).